The primary structure comprises 223 residues: Flagellar L-ring protein (223 aa).

An N-terminal signal peptide occupies residues M1–A18. C19 is lipidated: N-palmitoyl cysteine. Residue C19 is the site of S-diacylglycerol cysteine attachment.

The protein belongs to the FlgH family. As to quaternary structure, the basal body constitutes a major portion of the flagellar organelle and consists of four rings (L,P,S, and M) mounted on a central rod.

The protein localises to the cell outer membrane. The protein resides in the bacterial flagellum basal body. Functionally, assembles around the rod to form the L-ring and probably protects the motor/basal body from shearing forces during rotation. The polypeptide is Flagellar L-ring protein (Herminiimonas arsenicoxydans).